The following is a 276-amino-acid chain: 3-methyl-2-oxobutanoate hydroxymethyltransferase (276 aa).

Residues Asp44 and Asp83 each contribute to the Mg(2+) site. Residues 44–45 (DS), Asp83, and Lys112 each bind 3-methyl-2-oxobutanoate. Glu114 is a Mg(2+) binding site. Residue Glu180 is the Proton acceptor of the active site. The tract at residues 256-276 (PTEAQSSRMKPDELSRALNAE) is disordered.

This sequence belongs to the PanB family. In terms of assembly, homodecamer; pentamer of dimers. Mg(2+) is required as a cofactor.

The protein localises to the cytoplasm. It carries out the reaction 3-methyl-2-oxobutanoate + (6R)-5,10-methylene-5,6,7,8-tetrahydrofolate + H2O = 2-dehydropantoate + (6S)-5,6,7,8-tetrahydrofolate. Its pathway is cofactor biosynthesis; (R)-pantothenate biosynthesis; (R)-pantoate from 3-methyl-2-oxobutanoate: step 1/2. Functionally, catalyzes the reversible reaction in which hydroxymethyl group from 5,10-methylenetetrahydrofolate is transferred onto alpha-ketoisovalerate to form ketopantoate. This Gluconacetobacter diazotrophicus (strain ATCC 49037 / DSM 5601 / CCUG 37298 / CIP 103539 / LMG 7603 / PAl5) protein is 3-methyl-2-oxobutanoate hydroxymethyltransferase.